Consider the following 580-residue polypeptide: Cytochrome P450 monooxygenase helB1 (580 aa).

The segment at 1–32 (MRTYAIRPVSNRLPGPIEPKKHRRDRDNSTTG) is disordered. N-linked (GlcNAc...) asparagine glycosylation is present at asparagine 28. Residues 61–81 (FLNTISVLQVLAAIFIGALTY) traverse the membrane as a helical segment. Position 497 (cysteine 497) interacts with heme.

The protein belongs to the cytochrome P450 family. Heme serves as cofactor.

Its subcellular location is the membrane. It functions in the pathway mycotoxin biosynthesis. Functionally, cytochrome P450 monooxygenase; part of the gene cluster that mediates the biosynthesis of helvolic acid, an antibacterial nortriterpenoid. Protostadienol synthase helA cyclizes (3S)-oxidosqualene to (17Z)-protosta-17(20),24-dien-3-beta-ol (protostadienol). The synthesis of protostadienol is followed by several steps of monooxygenation, dehydrogenation, and acyl transfer to yield the final helvolic acid. Following the cyclization to the tetracyclic protostadienol by helA, cytochrome P450 monooxygenases helB1-mediated and helB2-mediated oxidation at C-4 and C-16, acyltransferase helD2-dependent acetylation of 16-OH, oxidation of C-21 by cytochrome P450 monooxygenase helB4, and short chain dehydrogenase helC-dependent oxidative decarboxylation yield the fusidane skeleton. This intermediate is further modified in three additional steps mediated by the cytochrome P450 monooxygenase helB3, the acyltransferase helD1, and the 3-ketosteroid 1-dehydrogenase helE to give helvolic acid. Compared with the late stages in the biosynthesis of helvolic acid, enzymes involved in the early stage modifications act in a relatively strict order. The hydroxylation of C-16 by helB1 and subsequent acetylation by helD2 should occur before the helB3-mediated oxidation of C-21. C-4 demethylation in fusidane-type antibiotics proceeds in an unusual manner though it is also achieved by oxidative decarboxylation. The methyl group at C-4 beta position is oxidized by helB1 and subsequently removed by the short chain dehydrogenase helC. The sequence is that of Cytochrome P450 monooxygenase helB1 from Aspergillus fumigatus (strain ATCC MYA-4609 / CBS 101355 / FGSC A1100 / Af293) (Neosartorya fumigata).